Here is a 167-residue protein sequence, read N- to C-terminus: NADH-quinone oxidoreductase subunit B (167 aa).

The [4Fe-4S] cluster site is built by Cys-48, Cys-49, Cys-113, and Cys-143.

This sequence belongs to the complex I 20 kDa subunit family. As to quaternary structure, NDH-1 is composed of 14 different subunits. Subunits NuoB, C, D, E, F, and G constitute the peripheral sector of the complex. Requires [4Fe-4S] cluster as cofactor.

The protein localises to the cell membrane. It catalyses the reaction a quinone + NADH + 5 H(+)(in) = a quinol + NAD(+) + 4 H(+)(out). NDH-1 shuttles electrons from NADH, via FMN and iron-sulfur (Fe-S) centers, to quinones in the respiratory chain. Couples the redox reaction to proton translocation (for every two electrons transferred, four hydrogen ions are translocated across the cytoplasmic membrane), and thus conserves the redox energy in a proton gradient. In Wolbachia pipientis subsp. Culex pipiens (strain wPip), this protein is NADH-quinone oxidoreductase subunit B.